Consider the following 271-residue polypeptide: Thiazole synthase (271 aa).

The active-site Schiff-base intermediate with DXP is Lys-95. Residues Gly-156, 182–183 (AG), and 204–205 (NT) contribute to the 1-deoxy-D-xylulose 5-phosphate site.

It belongs to the ThiG family. In terms of assembly, homotetramer. Forms heterodimers with either ThiH or ThiS.

It localises to the cytoplasm. The enzyme catalyses [ThiS sulfur-carrier protein]-C-terminal-Gly-aminoethanethioate + 2-iminoacetate + 1-deoxy-D-xylulose 5-phosphate = [ThiS sulfur-carrier protein]-C-terminal Gly-Gly + 2-[(2R,5Z)-2-carboxy-4-methylthiazol-5(2H)-ylidene]ethyl phosphate + 2 H2O + H(+). Its pathway is cofactor biosynthesis; thiamine diphosphate biosynthesis. Functionally, catalyzes the rearrangement of 1-deoxy-D-xylulose 5-phosphate (DXP) to produce the thiazole phosphate moiety of thiamine. Sulfur is provided by the thiocarboxylate moiety of the carrier protein ThiS. In vitro, sulfur can be provided by H(2)S. This chain is Thiazole synthase, found in Shewanella amazonensis (strain ATCC BAA-1098 / SB2B).